The primary structure comprises 145 residues: Large-conductance mechanosensitive channel (145 aa).

The next 3 membrane-spanning stretches (helical) occupy residues 14 to 34 (VMDL…VKSL), 38 to 58 (LIMP…YFLP), and 81 to 101 (GSFL…FLMV).

This sequence belongs to the MscL family. As to quaternary structure, homopentamer.

Its subcellular location is the cell inner membrane. In terms of biological role, channel that opens in response to stretch forces in the membrane lipid bilayer. May participate in the regulation of osmotic pressure changes within the cell. The chain is Large-conductance mechanosensitive channel from Rhizobium johnstonii (strain DSM 114642 / LMG 32736 / 3841) (Rhizobium leguminosarum bv. viciae).